A 330-amino-acid polypeptide reads, in one-letter code: Polyprenal reductase (330 aa).

Residues 1-16 (MAGWAGAELSVLNPLR) lie on the Cytoplasmic side of the membrane. The helical transmembrane segment at 17-37 (ALWLLLAAAFLLALLLQLAPA) threads the bilayer. The Lumenal portion of the chain corresponds to 38-89 (RLLPSCALFQDLIRYGKTKQSGSRRPAVCRAFDVPKRYFSHFYVVSVLWNGS). A helical membrane pass occupies residues 90–110 (LLWFLSQSLFLGAPFPSWLWA). Residues 111-136 (LLRTLGVTQFQALGMESKASRIQGKK) are Cytoplasmic-facing. A helical transmembrane segment spans residues 137–157 (LALSTFLVLVFLWVHSLRRLF). Topologically, residues 158 to 169 (ECFYVSVFSNTA) are lumenal. The chain crosses the membrane as a helical span at residues 170-190 (IHVVQYCFGLVYYVLVGLTVL). At 191-206 (SQVPMNDKNVYALGKN) the chain is on the cytoplasmic side. A helical membrane pass occupies residues 207–227 (LLLQARWFHILGMMMFFWSSA). Topologically, residues 228–277 (HQYKCHVILSNLRRNKKGVVIHCQHRIPFGDWFEYVSSANYLAELMIYIS) are lumenal. A helical transmembrane segment spans residues 278 to 298 (MAVTFGLHNVTWWLVVTYVFF). At 299–330 (SQALSAFFNHRFYKSTFVSYPKHRKAFLPFLF) the chain is on the cytoplasmic side.

Belongs to the steroid 5-alpha reductase family. Polyprenal reductase subfamily. As to expression, expressed in the 2 tissues tested i.e. testis and liver.

Its subcellular location is the endoplasmic reticulum membrane. It carries out the reaction a di-trans,poly-cis-dolichal + NADP(+) = a di-trans,poly-cis-polyprenal + NADPH + H(+). It catalyses the reaction a 3-oxo-5alpha-steroid + NADP(+) = a 3-oxo-Delta(4)-steroid + NADPH + H(+). The catalysed reaction is androst-4-ene-3,17-dione + NADPH + H(+) = 5alpha-androstan-3,17-dione + NADP(+). The enzyme catalyses 17beta-hydroxy-5alpha-androstan-3-one + NADP(+) = testosterone + NADPH + H(+). It participates in protein modification; protein glycosylation. Plays a key role in early steps of protein N-linked glycosylation by being involved in the conversion of polyprenol into dolichol. Acts as a polyprenal reductase that mediates the reduction of polyprenal into dolichal in a NADP-dependent mechanism. Dolichols are required for the synthesis of dolichol-linked monosaccharides and the oligosaccharide precursor used for N-glycosylation. Also able to convert testosterone (T) into 5-alpha-dihydrotestosterone (DHT). The sequence is that of Polyprenal reductase from Rattus norvegicus (Rat).